The primary structure comprises 190 residues: Large ribosomal subunit protein bL17 (190 aa).

Residues 135–165 (AKAAPAAEEAPAEEAPAAEEAATEEAPAAEE) are compositionally biased toward low complexity. A disordered region spans residues 135–190 (AKAAPAAEEAPAEEAPAAEEAATEEAPAAEETATEEAAAEEAPAAEEAPAEEKDAK).

Belongs to the bacterial ribosomal protein bL17 family. As to quaternary structure, part of the 50S ribosomal subunit. Contacts protein L32.

The chain is Large ribosomal subunit protein bL17 from Pseudarthrobacter chlorophenolicus (strain ATCC 700700 / DSM 12829 / CIP 107037 / JCM 12360 / KCTC 9906 / NCIMB 13794 / A6) (Arthrobacter chlorophenolicus).